A 124-amino-acid polypeptide reads, in one-letter code: Small ribosomal subunit protein uS12 (124 aa).

Asp89 is subject to 3-methylthioaspartic acid. Residues 101–124 (TLDTSGVKDRRQSRSKYGAKAPKE) form a disordered region.

Belongs to the universal ribosomal protein uS12 family. Part of the 30S ribosomal subunit. Contacts proteins S8 and S17. May interact with IF1 in the 30S initiation complex.

With S4 and S5 plays an important role in translational accuracy. Functionally, interacts with and stabilizes bases of the 16S rRNA that are involved in tRNA selection in the A site and with the mRNA backbone. Located at the interface of the 30S and 50S subunits, it traverses the body of the 30S subunit contacting proteins on the other side and probably holding the rRNA structure together. The combined cluster of proteins S8, S12 and S17 appears to hold together the shoulder and platform of the 30S subunit. The chain is Small ribosomal subunit protein uS12 from Synechococcus sp. (strain CC9902).